The sequence spans 100 residues: Co-chaperonin GroES (100 aa).

Belongs to the GroES chaperonin family. As to quaternary structure, heptamer of 7 subunits arranged in a ring. Interacts with the chaperonin GroEL.

The protein resides in the cytoplasm. In terms of biological role, together with the chaperonin GroEL, plays an essential role in assisting protein folding. The GroEL-GroES system forms a nano-cage that allows encapsulation of the non-native substrate proteins and provides a physical environment optimized to promote and accelerate protein folding. GroES binds to the apical surface of the GroEL ring, thereby capping the opening of the GroEL channel. In Mycobacterium tuberculosis (strain CDC 1551 / Oshkosh), this protein is Co-chaperonin GroES.